The primary structure comprises 1063 residues: ATP-dependent helicase hrq1 (1063 aa).

Residues 224–243 (TQSRKNQPVPPDSPSIPNDS) form a disordered region. The region spanning 320–503 (INHLWNGFHV…KIFGVDNIKL (184 aa)) is the Helicase ATP-binding domain. 333–340 (TSTSSGKS) lines the ATP pocket. The DEAH box signature appears at 444-447 (DEAH). In terms of domain architecture, Helicase C-terminal spans 539-717 (EASKLLIKFA…ELPINIRSDE (179 aa)).

This sequence belongs to the helicase family. HRQ1 subfamily. In terms of assembly, forms heptamer rings. Interacts with rhp14. The cofactor is Mg(2+).

Its subcellular location is the nucleus. It carries out the reaction Couples ATP hydrolysis with the unwinding of duplex DNA by translocating in the 3'-5' direction.. The enzyme catalyses ATP + H2O = ADP + phosphate + H(+). Its function is as follows. Helicase with 3'-5' helicase activity involved in genome stability. Functions in the nucleotide excision repair (NER) pathway and plays a critical role in DNA interstrand cross-link repair. Unwinds relatively long duplex DNA up to 120-bp and requires a long 3'-tail of at least 70 nucleotides for efficient unwinding of duplex DNA. Shows both processive helicase and DNA strand annealing activities. Affects telomere length by a non-catalytic mechanism, probably through inhibiting telomerase by competing with it for ssDNA binding. This chain is ATP-dependent helicase hrq1, found in Schizosaccharomyces pombe (strain 972 / ATCC 24843) (Fission yeast).